We begin with the raw amino-acid sequence, 321 residues long: Torsin-2A (321 aa).

A signal peptide spans 1–26; sequence MAAATRGCRPWGSLLGLLGLVSAAAA. ATP is bound at residue 93–100; sequence GWTGTGKS. Asn-149 is a glycosylation site (N-linked (GlcNAc...) asparagine).

Belongs to the ClpA/ClpB family. Torsin subfamily. As to quaternary structure, homohexamer. Interacts with TOR1AIP1. As to expression, isoform 1 is expressed ubiquitously, except in cardiac and endothelial tissues.

Its subcellular location is the endoplasmic reticulum lumen. The protein is Torsin-2A (TOR2A) of Homo sapiens (Human).